We begin with the raw amino-acid sequence, 542 residues long: CTP synthase (542 aa).

The amidoligase domain stretch occupies residues M1 to V265. Residue S13 participates in CTP binding. S13 serves as a coordination point for UTP. S14–I19 provides a ligand contact to ATP. Y54 provides a ligand contact to L-glutamine. D71 contacts ATP. 2 residues coordinate Mg(2+): D71 and E140. CTP contacts are provided by residues D147 to E149, K186 to Q191, and K222. UTP contacts are provided by residues K186 to Q191 and K222. Residues Y297–G532 enclose the Glutamine amidotransferase type-1 domain. G352 provides a ligand contact to L-glutamine. C379 acts as the Nucleophile; for glutamine hydrolysis in catalysis. L-glutamine-binding positions include Y380–Q383, E403, and R460. Catalysis depends on residues H505 and E507.

The protein belongs to the CTP synthase family. As to quaternary structure, homotetramer.

It carries out the reaction UTP + L-glutamine + ATP + H2O = CTP + L-glutamate + ADP + phosphate + 2 H(+). The enzyme catalyses L-glutamine + H2O = L-glutamate + NH4(+). The catalysed reaction is UTP + NH4(+) + ATP = CTP + ADP + phosphate + 2 H(+). It participates in pyrimidine metabolism; CTP biosynthesis via de novo pathway; CTP from UDP: step 2/2. Allosterically activated by GTP, when glutamine is the substrate; GTP has no effect on the reaction when ammonia is the substrate. The allosteric effector GTP functions by stabilizing the protein conformation that binds the tetrahedral intermediate(s) formed during glutamine hydrolysis. Inhibited by the product CTP, via allosteric rather than competitive inhibition. Its function is as follows. Catalyzes the ATP-dependent amination of UTP to CTP with either L-glutamine or ammonia as the source of nitrogen. Regulates intracellular CTP levels through interactions with the four ribonucleotide triphosphates. The chain is CTP synthase from Caldivirga maquilingensis (strain ATCC 700844 / DSM 13496 / JCM 10307 / IC-167).